A 120-amino-acid chain; its full sequence is NAD(P)H-quinone oxidoreductase subunit 3, chloroplastic (120 aa).

3 consecutive transmembrane segments (helical) span residues 10–30, 64–84, and 89–109; these read FLVF…ASKL, MFAL…PWAV, and MGFI…VGLV.

This sequence belongs to the complex I subunit 3 family. As to quaternary structure, NDH is composed of at least 16 different subunits, 5 of which are encoded in the nucleus.

It localises to the plastid. The protein resides in the chloroplast thylakoid membrane. The enzyme catalyses a plastoquinone + NADH + (n+1) H(+)(in) = a plastoquinol + NAD(+) + n H(+)(out). It carries out the reaction a plastoquinone + NADPH + (n+1) H(+)(in) = a plastoquinol + NADP(+) + n H(+)(out). In terms of biological role, NDH shuttles electrons from NAD(P)H:plastoquinone, via FMN and iron-sulfur (Fe-S) centers, to quinones in the photosynthetic chain and possibly in a chloroplast respiratory chain. The immediate electron acceptor for the enzyme in this species is believed to be plastoquinone. Couples the redox reaction to proton translocation, and thus conserves the redox energy in a proton gradient. This is NAD(P)H-quinone oxidoreductase subunit 3, chloroplastic from Chlorokybus atmophyticus (Soil alga).